The sequence spans 93 residues: Cell division protein FtsB (93 aa).

Over 1 to 3 (MRV) the chain is Cytoplasmic. A helical membrane pass occupies residues 4–21 (TLVVLLALFLALQYRLWF). At 22 to 93 (GKNSLPDYWR…FFRLVPDRNP (72 aa)) the chain is on the periplasmic side. A coiled-coil region spans residues 28 to 75 (DYWRLQQEVSNQKNTNENLERRNQLIYADIEDLREGEDALEERARNEL).

Belongs to the FtsB family. Part of a complex composed of FtsB, FtsL and FtsQ.

It localises to the cell inner membrane. Functionally, essential cell division protein. May link together the upstream cell division proteins, which are predominantly cytoplasmic, with the downstream cell division proteins, which are predominantly periplasmic. This Idiomarina loihiensis (strain ATCC BAA-735 / DSM 15497 / L2-TR) protein is Cell division protein FtsB.